The sequence spans 860 residues: Leucine--tRNA ligase (860 aa).

Residues 42 to 52 carry the 'HIGH' region motif; that stretch reads PYPSGRLHMGH. Positions 619 to 623 match the 'KMSKS' region motif; it reads KMSKS. Lys-622 serves as a coordination point for ATP.

Belongs to the class-I aminoacyl-tRNA synthetase family.

The protein localises to the cytoplasm. The catalysed reaction is tRNA(Leu) + L-leucine + ATP = L-leucyl-tRNA(Leu) + AMP + diphosphate. The sequence is that of Leucine--tRNA ligase from Escherichia coli O45:K1 (strain S88 / ExPEC).